Here is a 1287-residue protein sequence, read N- to C-terminus: MSVISKVSYSLYSQNEINATDININYVKDDDEVGTVKDSRLGATDGVLCRTCNRTELECFGHWGKVRIYENIIIKPEYISEVIRILGHICLTCGLLRSREPYTVNISSLTSGELKKLKDKISSKKKSCWNSRCMQPYQKVNFSKKKVCLVNKTDEFCVPNALVYEKITSIHHKFWPVLDIHQDPATLFYRGYFSIPPLLIRPVISFWIDNVPKDTNELTYLLGVIVKHCNANADEPTIQKAIIEYDNIKLISTNSTTNNLSYITSGKTNMLRSFVVARRKDQTARSVLGPDSSLDITEVGIPDYVRNTLTEKIFINAFTIDKVKDMFQRGEIKYYFNKQLHQLTKIKQNKFIKNKIHLLPGDWVETNIQEFTNIIFGRQPSLHRYNVISSSVRKTEEDTIKIPPGIANSQNADFDGDEEWTIVEQNPKSVIEQSILMYPTTLLKHDVHGMPVYGSIQDEILAAYNLFREYDLTQDEVLNILGKYGLEFLTDYERKDKYTGKDIFKFLINEPEINYPGIICNGEIIAENIDSNFIVSMKHMSISGLITDYKSSVEGIKFINKASYVFKRYLKIYGFSITFRNLCPDFEFTKKLREQNIKKINDIKHSYVKYLYDVANGDIIPLSRSDEMDAVDSILSGLTNFNIQEIEKYMKEVISKDPDNSLMKMSCAGYKVNPTELMYILGTYGQQRIDGEPIDTKIYGRVLPYFLPDSKDPEGKGYILNSLIQGLTGSQYYYAMLIARSQSTDIVCETSRTGTLARKIIKKMEDMVVDSYGQIVYGNTLVKYAANYTKIQGSVCKSVELIYPDESLTWFLEISALWDKLKNGFIYNQGQKIAKYILAPFNFKVFMKLDETNPMKSKDLYDKIQLVIKDVRENYFFDVTSIDFIEYVFLTHLNPSRVKVSEDTANLIFEKLYEKLNYTLGGGTPIGIISAQVLSEKFTQQALSSFHTTEKSGGIKRKLGFNEFNQLTNLSKNKTEIITLISDDITKLQTIKMNFEFVYLGELFPEITIEEDKNYYRIDINVNRLYIKRNQLTELIVEYMLEKFVSYSVLVKNWGMETNIINEHIIRFSLFIVFTEPVNLNKNKFMMMLPGAANKGKISKYKIPISEYQSYTDYNKTVKLYRLTVELMGLKELGTFDLVNVNVIPGVWNTYEIFGIESAKSYLCEALLSTYGEGLDYLYQPCDLLASLICLNYEPESINKFKFGPVSALKRATFGDNKAIINAALYKKTEPVNDNSSCHFFSKVPKIGTGYYKYFIDLEKFLRIKKTISEKLIDKKLVDIGDNITDF.

The protein belongs to the poxviridae DNA-directed RNA polymerase 147 kDa subunit family. The DNA-dependent RNA polymerase used for intermediate and late genes expression consists of eight subunits Rpo30/OPG66, Rpo7/OPG90, Rpo22/OPG103, Rpo147/OPG105, Rpo18/OPG119, Rpo19/OPG131, Rpo132/OPG151 and Rpo35/OPG156. The same holoenzyme, with the addition of the transcription-specificity factor OPG109, is used for early gene expression.

The protein localises to the virion. The catalysed reaction is RNA(n) + a ribonucleoside 5'-triphosphate = RNA(n+1) + diphosphate. Functionally, part of the DNA-dependent RNA polymerase which catalyzes the transcription of viral DNA into RNA using the four ribonucleoside triphosphates as substrates. Responsible for the transcription of early, intermediate and late genes. DNA-dependent RNA polymerase associates with the early transcription factor (ETF), itself composed of OPG118 and OPG133, thereby allowing the early genes transcription. Late transcription, and probably also intermediate transcription, require newly synthesized RNA polymerase. In Fowlpox virus (strain NVSL) (FPV), this protein is DNA-directed RNA polymerase 147 kDa polypeptide (OPG105).